The primary structure comprises 152 residues: MKVIFMKDVRGKGKRGEIKNVPDGYAQNFLIKRGLAKEANQSAMSQLNAERKAEQRREAEELAEAKDLQKRLEDDKTVVEIVAKAGEDSRLFGSIPSKQIVQALDKQYNLKLDKRKVELPEPIRSLGFTNVPVKLHADVTAKIRVHVVAKQQ.

The disordered stretch occupies residues 41-61; it reads QSAMSQLNAERKAEQRREAEE. Basic and acidic residues predominate over residues 49 to 61; it reads AERKAEQRREAEE.

This sequence belongs to the bacterial ribosomal protein bL9 family.

In terms of biological role, binds to the 23S rRNA. The sequence is that of Large ribosomal subunit protein bL9 from Levilactobacillus brevis (strain ATCC 367 / BCRC 12310 / CIP 105137 / JCM 1170 / LMG 11437 / NCIMB 947 / NCTC 947) (Lactobacillus brevis).